The chain runs to 404 residues: Acyl-[acyl-carrier-protein] desaturase 7, chloroplastic (404 aa).

The transit peptide at 1–39 (MAASATTSTLAVTMFGYPNRNCHLKPPATATLRFWRSAA) directs the protein to the chloroplast. Residues E138, E176, H179, E229, E262, and H265 each contribute to the Fe cation site.

Belongs to the fatty acid desaturase type 2 family. In terms of assembly, homodimer. It depends on Fe(2+) as a cofactor.

Its subcellular location is the plastid. The protein localises to the chloroplast. Its pathway is lipid metabolism; fatty acid metabolism. Introduces a cis double bond in the acyl chain of an acyl-[acyl-carrier protein]. The polypeptide is Acyl-[acyl-carrier-protein] desaturase 7, chloroplastic (Oryza sativa subsp. indica (Rice)).